A 262-amino-acid polypeptide reads, in one-letter code: Acyl-[acyl-carrier-protein]--UDP-N-acetylglucosamine O-acyltransferase (262 aa).

This sequence belongs to the transferase hexapeptide repeat family. LpxA subfamily. As to quaternary structure, homotrimer.

It localises to the cytoplasm. It carries out the reaction a (3R)-hydroxyacyl-[ACP] + UDP-N-acetyl-alpha-D-glucosamine = a UDP-3-O-[(3R)-3-hydroxyacyl]-N-acetyl-alpha-D-glucosamine + holo-[ACP]. It participates in glycolipid biosynthesis; lipid IV(A) biosynthesis; lipid IV(A) from (3R)-3-hydroxytetradecanoyl-[acyl-carrier-protein] and UDP-N-acetyl-alpha-D-glucosamine: step 1/6. Its function is as follows. Involved in the biosynthesis of lipid A, a phosphorylated glycolipid that anchors the lipopolysaccharide to the outer membrane of the cell. The polypeptide is Acyl-[acyl-carrier-protein]--UDP-N-acetylglucosamine O-acyltransferase (Histophilus somni (strain 129Pt) (Haemophilus somnus)).